We begin with the raw amino-acid sequence, 226 residues long: ATP synthase subunit a (226 aa).

The next 6 membrane-spanning stretches (helical) occupy residues 17–37, 79–99, 105–125, 134–154, 176–196, and 199–219; these read FSYF…AMMA, LVAT…LPGF, SLNL…FEGI, FAHF…IEIV, LFLM…AYVL, and FMAF…LAGA.

Belongs to the ATPase A chain family. F-type ATPases have 2 components, CF(1) - the catalytic core - and CF(0) - the membrane proton channel. CF(1) has five subunits: alpha(3), beta(3), gamma(1), delta(1), epsilon(1). CF(0) has three main subunits: a(1), b(2) and c(9-12). The alpha and beta chains form an alternating ring which encloses part of the gamma chain. CF(1) is attached to CF(0) by a central stalk formed by the gamma and epsilon chains, while a peripheral stalk is formed by the delta and b chains.

The protein resides in the cell inner membrane. In terms of biological role, key component of the proton channel; it plays a direct role in the translocation of protons across the membrane. In Campylobacter jejuni subsp. doylei (strain ATCC BAA-1458 / RM4099 / 269.97), this protein is ATP synthase subunit a.